A 304-amino-acid chain; its full sequence is 4-diphosphocytidyl-2-C-methyl-D-erythritol kinase (304 aa).

Residue K18 is part of the active site. An ATP-binding site is contributed by P103 to A113. D145 is a catalytic residue.

This sequence belongs to the GHMP kinase family. IspE subfamily.

The catalysed reaction is 4-CDP-2-C-methyl-D-erythritol + ATP = 4-CDP-2-C-methyl-D-erythritol 2-phosphate + ADP + H(+). It functions in the pathway isoprenoid biosynthesis; isopentenyl diphosphate biosynthesis via DXP pathway; isopentenyl diphosphate from 1-deoxy-D-xylulose 5-phosphate: step 3/6. Its function is as follows. Catalyzes the phosphorylation of the position 2 hydroxy group of 4-diphosphocytidyl-2C-methyl-D-erythritol. The chain is 4-diphosphocytidyl-2-C-methyl-D-erythritol kinase from Rhodospirillum rubrum (strain ATCC 11170 / ATH 1.1.1 / DSM 467 / LMG 4362 / NCIMB 8255 / S1).